A 157-amino-acid chain; its full sequence is Small ribosomal subunit protein uS7 (157 aa).

It belongs to the universal ribosomal protein uS7 family. In terms of assembly, part of the 30S ribosomal subunit. Contacts proteins S9 and S11.

Functionally, one of the primary rRNA binding proteins, it binds directly to 16S rRNA where it nucleates assembly of the head domain of the 30S subunit. Is located at the subunit interface close to the decoding center, probably blocks exit of the E-site tRNA. This is Small ribosomal subunit protein uS7 from Chloroflexus aggregans (strain MD-66 / DSM 9485).